The primary structure comprises 293 residues: 4-hydroxy-tetrahydrodipicolinate synthase (293 aa).

Thr44 is a binding site for pyruvate. Residue Tyr132 is the Proton donor/acceptor of the active site. Lys160 (schiff-base intermediate with substrate) is an active-site residue. Position 202 (Ile202) interacts with pyruvate.

It belongs to the DapA family. As to quaternary structure, homotetramer; dimer of dimers.

Its subcellular location is the cytoplasm. It catalyses the reaction L-aspartate 4-semialdehyde + pyruvate = (2S,4S)-4-hydroxy-2,3,4,5-tetrahydrodipicolinate + H2O + H(+). Its pathway is amino-acid biosynthesis; L-lysine biosynthesis via DAP pathway; (S)-tetrahydrodipicolinate from L-aspartate: step 3/4. In terms of biological role, catalyzes the condensation of (S)-aspartate-beta-semialdehyde [(S)-ASA] and pyruvate to 4-hydroxy-tetrahydrodipicolinate (HTPA). The chain is 4-hydroxy-tetrahydrodipicolinate synthase from Pelagibacter ubique (strain HTCC1062).